We begin with the raw amino-acid sequence, 557 residues long: Formate--tetrahydrofolate ligase (557 aa).

ATP is bound at residue 44 to 51 (TPLGEGKS).

It belongs to the formate--tetrahydrofolate ligase family.

The enzyme catalyses (6S)-5,6,7,8-tetrahydrofolate + formate + ATP = (6R)-10-formyltetrahydrofolate + ADP + phosphate. It participates in one-carbon metabolism; tetrahydrofolate interconversion. This is Formate--tetrahydrofolate ligase from Desulfotalea psychrophila (strain LSv54 / DSM 12343).